The sequence spans 196 residues: MPIGVPKVPFRNPGEDSSNWIDVYNRLYRERLLFLGQDIDSEISNQLIGLMVYLSTESEIKDLYLFINSPGGWVIPGIAIYDTMQFVRPDVQTVCMGLAASMGSFILVGGKITKRLAFPHARVMIHQPFAAFYEAQIGEFVLEAEELLKLREILTRVYAQRTGKPLWVVSEDMERDVFMSAAEAQVHGIVDLVAVA.

The active-site Nucleophile is the Ser101. The active site involves His126.

The protein belongs to the peptidase S14 family. Component of the chloroplastic Clp protease core complex.

The protein localises to the plastid. It localises to the chloroplast stroma. It carries out the reaction Hydrolysis of proteins to small peptides in the presence of ATP and magnesium. alpha-casein is the usual test substrate. In the absence of ATP, only oligopeptides shorter than five residues are hydrolyzed (such as succinyl-Leu-Tyr-|-NHMec, and Leu-Tyr-Leu-|-Tyr-Trp, in which cleavage of the -Tyr-|-Leu- and -Tyr-|-Trp bonds also occurs).. Cleaves peptides in various proteins in a process that requires ATP hydrolysis. Has a chymotrypsin-like activity. Plays a major role in the degradation of misfolded proteins. This Populus trichocarpa (Western balsam poplar) protein is ATP-dependent Clp protease proteolytic subunit.